Reading from the N-terminus, the 251-residue chain is Cell division protein ZapD (251 aa).

The protein belongs to the ZapD family. In terms of assembly, interacts with FtsZ.

The protein localises to the cytoplasm. Functionally, cell division factor that enhances FtsZ-ring assembly. Directly interacts with FtsZ and promotes bundling of FtsZ protofilaments, with a reduction in FtsZ GTPase activity. This chain is Cell division protein ZapD, found in Paraburkholderia phymatum (strain DSM 17167 / CIP 108236 / LMG 21445 / STM815) (Burkholderia phymatum).